The primary structure comprises 100 residues: Tuberoinfundibular peptide of 39 residues (100 aa).

Residues 1-30 (METRQVSRSPRVRLLLLLLLLLVVPWGVRT) form the signal peptide. The propeptide occupies 31 to 59 (ASGVALPPVGVLSLRPPGRAWADPATPRP).

The protein belongs to the parathyroid hormone family. Ligand of high affinity for the PTH2 receptor (PTH2R).

It localises to the secreted. Functionally, plays a role as a potent and selective agonist of PTH2R resulting in adenyl cyclase activation and intracellular calcium levels elevation. Induces protein kinase C beta activation, recruitment of beta-arrestin and PTH2R internalization. May inhibit cell proliferation via its action of PTH2R activation. Neuropeptide which may also have a role in spermatogenesis. May activate nociceptors and nociceptive circuits. The sequence is that of Tuberoinfundibular peptide of 39 residues (PTH2) from Bos taurus (Bovine).